The following is a 377-amino-acid chain: Opsin, blue-sensitive (377 aa).

Topologically, residues 1–56 are extracellular; that stretch reads MLLHNKTLAGKALAFIAEEGYVPSMREKFLGWNVPPEYSDLVHPHWRAFPAPGKHF. An N-linked (GlcNAc...) asparagine glycan is attached at asparagine 5. The chain crosses the membrane as a helical span at residues 57-81; the sequence is HIGLAIIYSMLLIMSLVGNCCVIWI. The Cytoplasmic segment spans residues 82–93; that stretch reads FSTSKSLRTPSN. Residues 94-119 form a helical membrane-spanning segment; it reads MFIVSLAIFDIIMAFEMPMLVISSFM. The Extracellular portion of the chain corresponds to 120-132; it reads ERMIGWEIGCDVY. Residues cysteine 129 and cysteine 206 are joined by a disulfide bond. The chain crosses the membrane as a helical span at residues 133–152; it reads SVFGSISGMGQAMTNAAIAF. Over 153–170 the chain is Cytoplasmic; the sequence is DRYRTISCPIDGRLNSKQ. A helical membrane pass occupies residues 171–195; it reads AAVIIAFTWFWVTPFTVLPLLKVWG. Over 196-219 the chain is Extracellular; it reads RYTTEGFLTTCSFDFLTDDEDTKV. The helical transmembrane segment at 220–247 threads the bilayer; it reads FVTCIFIWAYVIPLIFIILFYSRLLSSI. Residues 248 to 282 are Cytoplasmic-facing; it reads RNHEKMLREQAKKMNVKSLVSNQDKERSAEVRIAK. Residues 283–306 traverse the membrane as a helical segment; the sequence is VAFTIFFLFLLAWTPYATVALIGV. Topologically, residues 307–314 are extracellular; sequence YGNRELLT. The helical transmembrane segment at 315-339 threads the bilayer; the sequence is PVSTMLPAVFAKTVSCIDPWIYAIN. Position 326 is an N6-(retinylidene)lysine (lysine 326). Topologically, residues 340–377 are cytoplasmic; it reads HPRYRQELQKRCKWMGIHEPETTSDATSAQTEKIKTDE.

Belongs to the G-protein coupled receptor 1 family. Opsin subfamily. Post-translationally, phosphorylated on some or all of the serine and threonine residues present in the C-terminal region. In terms of tissue distribution, expressed in the dorsal region of the retina and sparsely expressed in the ventral region.

It localises to the membrane. Its function is as follows. Visual pigments are the light-absorbing molecules that mediate vision. They consist of an apoprotein, opsin, covalently linked to 11-cis-retinal. The sequence is that of Opsin, blue-sensitive (BLOP) from Apis mellifera (Honeybee).